Here is a 714-residue protein sequence, read N- to C-terminus: Fatty acid oxidation complex subunit alpha (714 aa).

The enoyl-CoA hydratase stretch occupies residues 1–190; that stretch reads MEMASAFTLN…KLGLVDDVVP (190 aa). A 3-hydroxyacyl-CoA dehydrogenase region spans residues 306–714; sequence APLNSVGILG…FWKTTATDLQ (409 aa).

In the N-terminal section; belongs to the enoyl-CoA hydratase/isomerase family. This sequence in the central section; belongs to the 3-hydroxyacyl-CoA dehydrogenase family. As to quaternary structure, heterotetramer of two alpha chains (FadJ) and two beta chains (FadI).

The protein resides in the cytoplasm. The catalysed reaction is a (3S)-3-hydroxyacyl-CoA = a (2E)-enoyl-CoA + H2O. It carries out the reaction a 4-saturated-(3S)-3-hydroxyacyl-CoA = a (3E)-enoyl-CoA + H2O. It catalyses the reaction a (3S)-3-hydroxyacyl-CoA + NAD(+) = a 3-oxoacyl-CoA + NADH + H(+). The enzyme catalyses (3S)-3-hydroxybutanoyl-CoA = (3R)-3-hydroxybutanoyl-CoA. It participates in lipid metabolism; fatty acid beta-oxidation. In terms of biological role, catalyzes the formation of a hydroxyacyl-CoA by addition of water on enoyl-CoA. Also exhibits 3-hydroxyacyl-CoA epimerase and 3-hydroxyacyl-CoA dehydrogenase activities. The protein is Fatty acid oxidation complex subunit alpha of Escherichia coli O7:K1 (strain IAI39 / ExPEC).